A 252-amino-acid chain; its full sequence is Sulfoacetaldehyde reductase 2 (252 aa).

An NADP(+)-binding site is contributed by 6 to 30 (LITGATSGFGRAAARRFADAGWSLI). Ser139 is a substrate binding site. The active-site Proton acceptor is the Tyr152.

This sequence belongs to the short-chain dehydrogenases/reductases (SDR) family. In terms of assembly, homodimer and heterotetramer.

The catalysed reaction is 2-hydroxyethane-1-sulfonate + NADP(+) = sulfoacetaldehyde + NADPH + H(+). The protein operates within organosulfur degradation. In terms of biological role, catalyzes the formation of isethionate from 2-sulfoacetaldehyde in the deaminative pathway of taurine. Constitutively expressed enzyme that only mediates a small part of the activity observed in taurine-grown cells. The polypeptide is Sulfoacetaldehyde reductase 2 (isfD2) (Chromohalobacter salexigens (strain ATCC BAA-138 / DSM 3043 / CIP 106854 / NCIMB 13768 / 1H11)).